A 380-amino-acid polypeptide reads, in one-letter code: MSLTENLQLLLNLDSLPSKRENLIKRKECGLTIMLCGASGTGKTTFFNTLFATSLQPEKSYETAKETIAKKTLEVKKNKAVIEEDGFHINLTVLDTPGFGDFIDNTSCWNTVAEYLDEQHERYLIHDQNSLRVPRKDTRVHVCLYFITPVSFGMLPLDVLAMKELSTHVNLVPVIAKADTFTTPELTQIKQKIRRILEAQSIDVFHPSTEYSDYETAELLDSSLPYAIISSVNEVCKDDGEKSQGRRYPWGTSEIYEETHCDFLKLKKLLINRHMLELINTTETNIYERYRREQLTNRKSGIPKLKKEHYERLNNEKRAIQQKITQMTNETESFFQAKEEKMIETRDALNSELSEYHERIRALETQIESLKSYKGRGHKK.

Positions 27–297 (KECGLTIMLC…ERYRREQLTN (271 aa)) constitute a Septin-type G domain. Residues 37–44 (GASGTGKT) are G1 motif. GTP is bound by residues 37–44 (GASGTGKT), T72, G98, 177–185 (KADTFTTPE), and R246. Positions 95–98 (DTPG) are G3 motif. Residues 176–179 (AKAD) are G4 motif. Residues 304-380 (KLKKEHYERL…KSYKGRGHKK (77 aa)) are a coiled coil.

It belongs to the TRAFAC class TrmE-Era-EngA-EngB-Septin-like GTPase superfamily. Septin GTPase family. In terms of assembly, component of the sporulation-specific septin complex composed of at least spn2, spn5, spn6 and spn7.

It is found in the cytoplasm. The protein resides in the forespore membrane. In terms of biological role, septin-like protein involved in the correct orientation of forespore membrane extension during sporulation. The polypeptide is Septin homolog spn6 (spn6) (Schizosaccharomyces pombe (strain 972 / ATCC 24843) (Fission yeast)).